Here is a 352-residue protein sequence, read N- to C-terminus: Protein RecA (352 aa).

ATP is bound at residue 66 to 73; sequence GPESSGKT. The tract at residues 330–352 is disordered; the sequence is TKDDSKVATVDKANEEQAAEPVQ.

This sequence belongs to the RecA family.

It localises to the cytoplasm. Functionally, can catalyze the hydrolysis of ATP in the presence of single-stranded DNA, the ATP-dependent uptake of single-stranded DNA by duplex DNA, and the ATP-dependent hybridization of homologous single-stranded DNAs. It interacts with LexA causing its activation and leading to its autocatalytic cleavage. In Psychrobacter cryohalolentis (strain ATCC BAA-1226 / DSM 17306 / VKM B-2378 / K5), this protein is Protein RecA.